Consider the following 37-residue polypeptide: Cytochrome b6-f complex subunit 5 (37 aa).

Residues 5–25 form a helical membrane-spanning segment; the sequence is LLDGLVLGLVFATLGGLFYAA.

Belongs to the PetG family. In terms of assembly, the 4 large subunits of the cytochrome b6-f complex are cytochrome b6, subunit IV (17 kDa polypeptide, PetD), cytochrome f and the Rieske protein, while the 4 small subunits are PetG, PetL, PetM and PetN. The complex functions as a dimer.

Its subcellular location is the cellular thylakoid membrane. Its function is as follows. Component of the cytochrome b6-f complex, which mediates electron transfer between photosystem II (PSII) and photosystem I (PSI), cyclic electron flow around PSI, and state transitions. PetG is required for either the stability or assembly of the cytochrome b6-f complex. The chain is Cytochrome b6-f complex subunit 5 from Mastigocladus laminosus (Fischerella sp.).